The primary structure comprises 589 residues: TAF5-like RNA polymerase II p300/CBP-associated factor-associated factor 65 kDa subunit 5L (589 aa).

WD repeat units follow at residues 266–305 (NTEQ…LKSE), 340–379 (GHCG…NTVL), 382–421 (GHAY…PLRI), 424–463 (GHLA…SVRL), 466–505 (GHRG…LFKE), and 508–547 (GHTD…CNTP).

This sequence belongs to the WD repeat TAF5 family. In terms of assembly, the PCAF complex is composed of a number of TBP-associated factors (TAFS), such as TAF5, TAF5L, TAF6, TAF6L, TAF9, TAF10 and TAF12, PCAF, and also PCAF-associated factors (PAFs), such as TADA2L/ADA2, TADA3L/ADA3 and SPT3. Component of the STAGA transcription coactivator-HAT complex, at least composed of SUPT3H, GCN5L2, TAF5L, TAF6L, SUPT7L, TADA3L, TAD1L, TAF10, TAF12, TRRAP and TAF9.

The protein resides in the nucleus. Functionally, functions as a component of the PCAF complex. The PCAF complex is capable of efficiently acetylating histones in a nucleosomal context. The PCAF complex could be considered as the human version of the yeast SAGA complex. With TAF6L, acts as an epigenetic regulator essential for somatic reprogramming. Regulates target genes through H3K9ac deposition and MYC recruitment which trigger MYC regulatory network to orchestrate gene expression programs to control embryonic stem cell state. In Mus musculus (Mouse), this protein is TAF5-like RNA polymerase II p300/CBP-associated factor-associated factor 65 kDa subunit 5L.